Here is a 5207-residue protein sequence, read N- to C-terminus: E3 ubiquitin-protein ligase RNF213 (5207 aa).

2 disordered regions span residues 1-20 and 27-365; these read MECP…FCSQ and PAAP…EADV. A compositionally biased stretch (polar residues) spans 34 to 43; that stretch reads SENNNSTMAS. Residues 89 to 100 show a composition bias toward basic residues; it reads KKKKRKKKKKGN. Composition is skewed to low complexity over residues 101–117 and 136–157; these read KSAS…PASP and SQAQ…ATTP. Positions 188 to 197 are enriched in polar residues; the sequence is SEAQSSPQFQ. S208 and S217 each carry phosphoserine. Residues 248–266 show a composition bias toward polar residues; the sequence is GGSSEPGTELQTTEQQAGA. 3 stretches are compositionally biased toward basic and acidic residues: residues 285–294, 309–346, and 353–362; these read AGKEMKEKTQ, HCQE…EGKN, and KNEKEQKNQE. The stretch at 343-374 forms a coiled coil; the sequence is EGKNRSAAAVKNEKEQKNQEADVQEVKASTLS. A Glycyl lysine isopeptide (Lys-Gly) (interchain with G-Cter in SUMO2) cross-link involves residue K1151. Position 1258 is a phosphoserine (S1258). ATP-binding positions include 1995-2000, E2098, D2155, and R2216; that span reads GVGKSL. A Phosphoserine modification is found at S2273. The ATP site is built by K2499 and S2574. Zn(2+)-binding residues include C3997, C4000, C4012, H4014, C4017, C4020, C4032, C4035, C4505, and H4509. Residues 3997-4036 form an RING-type zinc finger; the sequence is CSICLGDAKDPVCLPCDHVHCLRCLRAWFASEQMICPYCL. Residues 4483–4555 form an RZ-type zinc finger; that stretch reads MPEDLLAQAR…VKDKADRTQT (73 aa). The active-site Nucleophile; for E3 ubiquitin-lipopolysaccharide ligase activity is the C4516. The Zn(2+) site is built by C4525 and C4528.

This sequence belongs to the AAA ATPase family. Monomer. Interacts with UBE2L3/UBCH7; UBE2L3/UBCH7 is the most efficient ubiquitin-conjugating enzyme E2 for the ubiquitin ligase activity. Interacts with UBE2N/UBC13; promoting 'Lys-63'-linked ubiquitination of target proteins. In terms of assembly, (Microbial infection) Interacts with M.tuberculosis protein Rv3655c, which impairs caspase-8 activation and suppresses macrophage apoptosis by blocking the extrinsic pathway. Autoubiquitinated. Widely expressed (at protein level). As to expression, major isoform detected in all tissues examined. In terms of tissue distribution, minor isoform with restricted expression.

It localises to the cytoplasm. The protein resides in the cytosol. Its subcellular location is the lipid droplet. It carries out the reaction S-ubiquitinyl-[E2 ubiquitin-conjugating enzyme]-L-cysteine + [acceptor protein]-L-lysine = [E2 ubiquitin-conjugating enzyme]-L-cysteine + N(6)-ubiquitinyl-[acceptor protein]-L-lysine.. The catalysed reaction is ATP + H2O = ADP + phosphate + H(+). It participates in protein modification; protein ubiquitination. In terms of biological role, atypical E3 ubiquitin ligase that can catalyze ubiquitination of both proteins and lipids, and which is involved in various processes, such as lipid metabolism, angiogenesis and cell-autonomous immunity. Acts as a key immune sensor by catalyzing ubiquitination of the lipid A moiety of bacterial lipopolysaccharide (LPS) via its RZ-type zinc-finger: restricts the proliferation of cytosolic bacteria, such as Salmonella, by generating the bacterial ubiquitin coat through the ubiquitination of LPS. Also acts indirectly by mediating the recruitment of the LUBAC complex, which conjugates linear polyubiquitin chains. Ubiquitination of LPS triggers cell-autonomous immunity, such as antibacterial autophagy, leading to degradation of the microbial invader. Involved in lipid metabolism by regulating fat storage and lipid droplet formation; act by inhibiting the lipolytic process. Also regulates lipotoxicity by inhibiting desaturation of fatty acids. Also acts as an E3 ubiquitin-protein ligase via its RING-type zinc finger: mediates 'Lys-63'-linked ubiquitination of target proteins. Involved in the non-canonical Wnt signaling pathway in vascular development: acts by mediating ubiquitination and degradation of FLNA and NFATC2 downstream of RSPO3, leading to inhibit the non-canonical Wnt signaling pathway and promoting vessel regression. Also has ATPase activity; ATPase activity is required for ubiquitination of LPS. The chain is E3 ubiquitin-protein ligase RNF213 from Homo sapiens (Human).